The chain runs to 178 residues: uncharacterized protein (178 aa).

Positions 1–19 (MKKNIHILGASGVGTSTLG) are cleaved as a signal peptide.

This is an uncharacterized protein from Bacillus subtilis (strain 168).